The sequence spans 426 residues: Phosphomethylpyrimidine synthase (426 aa).

Residues Asn65, Met94, Tyr123, His162, 184 to 186 (SRG), 225 to 228 (DGMR), and Glu264 each bind substrate. Residue His268 coordinates Zn(2+). Residue Tyr291 participates in substrate binding. A Zn(2+)-binding site is contributed by His332. Residues Cys408, Cys411, and Cys415 each coordinate [4Fe-4S] cluster.

Belongs to the ThiC family. Requires [4Fe-4S] cluster as cofactor.

It carries out the reaction 5-amino-1-(5-phospho-beta-D-ribosyl)imidazole + S-adenosyl-L-methionine = 4-amino-2-methyl-5-(phosphooxymethyl)pyrimidine + CO + 5'-deoxyadenosine + formate + L-methionine + 3 H(+). The protein operates within cofactor biosynthesis; thiamine diphosphate biosynthesis. Functionally, catalyzes the synthesis of the hydroxymethylpyrimidine phosphate (HMP-P) moiety of thiamine from aminoimidazole ribotide (AIR) in a radical S-adenosyl-L-methionine (SAM)-dependent reaction. The protein is Phosphomethylpyrimidine synthase of Methanococcus aeolicus (strain ATCC BAA-1280 / DSM 17508 / OCM 812 / Nankai-3).